Consider the following 421-residue polypeptide: Forkhead box protein J1 (421 aa).

Disordered stretches follow at residues 1–32 (MAES…LDDS) and 77–110 (ADPA…PPPD). Residues 11 to 21 (AGPGEEAGPEG) show a composition bias toward gly residues. The span at 90–99 (KPTSSCTSRS) shows a compositional bias: polar residues. A DNA-binding region (fork-head) is located at residues 120 to 210 (VKPPYSYATL…YAERLLSGAF (91 aa)).

It belongs to the FOXJ1 family. Predominantly expressed in tissues containing motile cilia.

The protein resides in the nucleus. Functionally, transcription factor specifically required for the formation of motile cilia. Acts by activating transcription of genes that mediate assembly of motile cilia, such as CFAP157. Binds the DNA consensus sequences 5'-HWDTGTTTGTTTA-3' or 5'-KTTTGTTGTTKTW-3' (where H is not G, W is A or T, D is not C, and K is G or T). Activates the transcription of a variety of ciliary proteins in the developing brain and lung. The protein is Forkhead box protein J1 of Mus musculus (Mouse).